We begin with the raw amino-acid sequence, 239 residues long: MSMLCYTLIIAFLIGIWAAPKSEDNVPLGSPATSDLSDTSCAQTHEGLKTSRNTDQRHPAPKKADDQELGSVANIIVDPKLFQKRQFQSPRVLFSTQPPPLSRDEQSVEFLDNEDALNRNIQAKRQNHPVHDLGEQSVCDSISEWVTKTTATDIKGNTVTVKVDVNLNNQVYKQYFFETKCRNPNPVPSGCRGIDSSHWNSYCTTTQTFVRALTMEGNQASWRFIRIDTACVCVISKKT.

The N-terminal stretch at 1-18 (MSMLCYTLIIAFLIGIWA) is a signal peptide. A propeptide spanning residues 19-125 (APKSEDNVPL…ALNRNIQAKR (107 aa)) is cleaved from the precursor. Positions 47 to 66 (GLKTSRNTDQRHPAPKKADD) are enriched in basic and acidic residues. Residues 47–68 (GLKTSRNTDQRHPAPKKADDQE) form a disordered region. 3 cysteine pairs are disulfide-bonded: Cys139-Cys203, Cys181-Cys231, and Cys191-Cys233.

This sequence belongs to the NGF-beta family. Homodimer; non-covalently linked. Expressed by the venom gland.

Its subcellular location is the secreted. Functionally, nerve growth factor is important for the development and maintenance of the sympathetic and sensory nervous systems. It stimulates division and differentiation of sympathetic and embryonic sensory neurons as well as basal forebrain cholinergic neurons in the brain. Its relevance in the snake venom is not clear. However, it has been shown to inhibit metalloproteinase-dependent proteolysis of platelet glycoprotein Ib alpha, suggesting a metalloproteinase inhibition to prevent metalloprotease autodigestion and/or protection against prey proteases. Binds a lipid between the two protein chains in the homodimer. The lipid-bound form promotes histamine relase from mouse mast cells, contrary to the lipid-free form. The chain is Venom nerve growth factor from Pseudechis porphyriacus (Red-bellied black snake).